Consider the following 194-residue polypeptide: 4'-phosphooxetanocin A phosphatase (194 aa).

4'-phosphooxetanocin A-binding residues include arginine 16 and tryptophan 17. An oxetanocin A-binding site is contributed by tryptophan 17. Mg(2+) contacts are provided by histidine 31, histidine 66, and aspartate 67. 4'-phosphooxetanocin A-binding residues include histidine 75, serine 78, and lysine 81. The oxetanocin A site is built by histidine 75 and serine 78. Position 132 (aspartate 132) interacts with Mg(2+).

This sequence belongs to the 5DNU family. As to quaternary structure, homodimer. Mg(2+) serves as cofactor. The cofactor is Co(2+). Mn(2+) is required as a cofactor.

The catalysed reaction is 4'-phosphooxetanocin A + H2O = oxetanocin A + phosphate. Phosphohydrolase involved in the biosynthesis of oxetanocin A (OXT-A), a nucleoside analog with antitumor, antiviral and antibacterial properties. Catalyzes the hydrolysis of phosphooxetanocin A (OXT-A-P) to generate oxetanocin A (OXT-A) and a molecule of inorganic phosphate. Can also bind and hydrolyze OXT triphosphate (OXT-A-PPP) and OXT diphosphate (OXT-A-PP), and thus catalyze the sequential hydrolysis of tri-, di- and mono-phosphorylated oxetanocin A compounds, releasing one molecule of inorganic phosphate at a time. In vitro can also use dATP, dAMP and dADP. This Priestia megaterium (Bacillus megaterium) protein is 4'-phosphooxetanocin A phosphatase.